Here is a 102-residue protein sequence, read N- to C-terminus: Small ribosomal subunit protein uS10 (102 aa).

It belongs to the universal ribosomal protein uS10 family. As to quaternary structure, part of the 30S ribosomal subunit.

In terms of biological role, involved in the binding of tRNA to the ribosomes. The chain is Small ribosomal subunit protein uS10 from Mycoplasma mycoides subsp. mycoides SC (strain CCUG 32753 / NCTC 10114 / PG1).